The chain runs to 405 residues: Aurora kinase A (405 aa).

Composition is skewed to polar residues over residues 32–82 and 91–110; these read VPSQ…QLQA and RSLNNTQKSEQPSSSAPGNN. Residues 32 to 127 form a disordered region; the sequence is VPSQNPLSAN…KQKNEESKKR (96 aa). 2 positions are modified to phosphoserine: S42 and S52. A compositionally biased stretch (basic and acidic residues) spans 111 to 127; it reads SEKELATKQKNEESKKR. In terms of domain architecture, Protein kinase spans 134 to 384; sequence FEIGRPLGKG…LKDVLEHPWI (251 aa). ATP is bound by residues K144, K163, and 212–214; that span reads EYA. The active-site Proton acceptor is the D257. K259 participates in a covalent cross-link: Glycyl lysine isopeptide (Lys-Gly) (interchain with G-Cter in SUMO2). ATP-binding positions include 261 to 262 and D275; that span reads EN. Residues 281-294 form an activation segment region; it reads HAPSSRRTTLCGTL. Phosphothreonine is present on residues T288 and T289. Phosphoserine is present on S343. Residues 385-405 are disordered; sequence MANSSKPSSSQKSKDSTSKQS. Over residues 396 to 405 the composition is skewed to basic and acidic residues; sequence KSKDSTSKQS.

The protein belongs to the protein kinase superfamily. Ser/Thr protein kinase family. Aurora subfamily. As to quaternary structure, part of a complex composed of NEDD9, AURKA and CTTN; within the complex NEDD9 acts as a scaffold protein and is required for complex formation. Identified in a complex with AUNIP and NIN. Interacts with FBXL7. Interacts with CPEB1, JTB, TACC1, TPX2, PPP2CA, as well as with the protein phosphatase type 1 (PP1) isoforms PPP1CA, PPP1CB and PPP1CC. Also interacts with its substrates ARHGEF2, BORA, KIF2A, PARD3, and p53/TP53. Interaction with BORA promotes phosphorylation of PLK1. Interacts with CIMAP3. Interacts with GADD45A, competing with its oligomerization. Interacts (via C-terminus) with AUNIP (via C-terminus). Interacts with FRY; this interaction facilitates AURKA-mediated PLK1 phosphorylation. Interacts with SIRT2. Interacts with MYCN; interaction is phospho-independent and triggers AURKA activation; AURKA competes with FBXW7 for binding to unphosphorylated MYCN but not for binding to phosphorylated MYCN. Interacts with HNRNPU. Interacts with AAAS. Interacts with KLHL18 and CUL3. Interacts with FOXP1. Interacts with HDAC6; AURKA-mediated phosphorylation of HDAC6 promotes deacetylation of alpha-tubulin. Activated by phosphorylation at Thr-289; this brings about a change in the conformation of the activation segment. Phosphorylation at Thr-289 varies during the cell cycle and is highest during M phase. Autophosphorylated at Thr-289 upon TPX2 binding. Thr-289 can be phosphorylated by several kinases, including PAK and PKA. Protein phosphatase type 1 (PP1) binds AURKA and inhibits its activity by dephosphorylating Thr-289 during mitosis. Phosphorylation at Ser-343 decreases the kinase activity. PPP2CA controls degradation by dephosphorylating Ser-52 at the end of mitosis. Post-translationally, ubiquitinated by the E3 ubiquitin-protein ligase complex SCF(FBXL7) during mitosis, leading to its degradation by the proteasome. Ubiquitinated by CHFR, leading to its degradation by the proteasome. Ubiquitinated by the anaphase-promoting complex (APC), leading to its degradation by the proteasome. Ubiquitinated by the CUL3-KLHL18 ligase leading to its activation at the centrosome which is required for initiating mitotic entry. Ubiquitination mediated by CUL3-KLHL18 ligase does not lead to its degradation by the proteasome.

It is found in the cytoplasm. The protein resides in the cytoskeleton. It localises to the microtubule organizing center. The protein localises to the centrosome. Its subcellular location is the spindle pole. It is found in the centriole. The protein resides in the cell projection. It localises to the neuron projection. The protein localises to the cilium. Its subcellular location is the cilium basal body. It is found in the basolateral cell membrane. It catalyses the reaction L-seryl-[protein] + ATP = O-phospho-L-seryl-[protein] + ADP + H(+). It carries out the reaction L-threonyl-[protein] + ATP = O-phospho-L-threonyl-[protein] + ADP + H(+). Its activity is regulated as follows. Activation of CDK1, appears to be an upstream event of AURKA activation. Phosphatase inhibitor-2 (PPP1R2) and TPX2 act also as activators. Inactivated by the G2 checkpoint. Inhibited by GADD45A and p53/TP53, and through dephosphorylation by protein phosphatase type 1 (PP1). MLN8054 is also a potent and selective inhibitor. Activated during the early phase of cilia disassembly in the presence of CIMAP3. Inhibited by the small molecule inhibitor VX-680. Its function is as follows. Mitotic serine/threonine kinase that contributes to the regulation of cell cycle progression. Associates with the centrosome and the spindle microtubules during mitosis and plays a critical role in various mitotic events including the establishment of mitotic spindle, centrosome duplication, centrosome separation as well as maturation, chromosomal alignment, spindle assembly checkpoint, and cytokinesis. Required for normal spindle positioning during mitosis and for the localization of NUMA1 and DCTN1 to the cell cortex during metaphase. Required for initial activation of CDK1 at centrosomes. Phosphorylates numerous target proteins, including ARHGEF2, BORA, BRCA1, CDC25B, DLGP5, HDAC6, KIF2A, LATS2, NDEL1, PARD3, PPP1R2, PLK1, RASSF1, TACC3, p53/TP53 and TPX2. Phosphorylates MCRS1 which is required for MCRS1-mediated kinetochore fiber assembly and mitotic progression. Regulates KIF2A tubulin depolymerase activity. Important for microtubule formation and/or stabilization. Required for normal axon formation. Plays a role in microtubule remodeling during neurite extension. Also acts as a key regulatory component of the p53/TP53 pathway, and particularly the checkpoint-response pathways critical for oncogenic transformation of cells, by phosphorylating and destabilizing p53/TP53. Phosphorylates its own inhibitors, the protein phosphatase type 1 (PP1) isoforms, to inhibit their activity. Inhibits cilia outgrowth. Required for cilia disassembly via phosphorylation of HDAC6 and subsequent deacetylation of alpha-tubulin. Regulates protein levels of the anti-apoptosis protein BIRC5 by suppressing the expression of the SCF(FBXL7) E3 ubiquitin-protein ligase substrate adapter FBXL7 through the phosphorylation of the transcription factor FOXP1. The chain is Aurora kinase A from Canis lupus familiaris (Dog).